The following is a 449-amino-acid chain: Glucose-6-phosphate isomerase (449 aa).

Glu-291 (proton donor) is an active-site residue. Active-site residues include His-312 and Lys-426.

Belongs to the GPI family.

It localises to the cytoplasm. The enzyme catalyses alpha-D-glucose 6-phosphate = beta-D-fructose 6-phosphate. The protein operates within carbohydrate biosynthesis; gluconeogenesis. Its pathway is carbohydrate degradation; glycolysis; D-glyceraldehyde 3-phosphate and glycerone phosphate from D-glucose: step 2/4. Catalyzes the reversible isomerization of glucose-6-phosphate to fructose-6-phosphate. The polypeptide is Glucose-6-phosphate isomerase (Streptococcus pyogenes serotype M2 (strain MGAS10270)).